A 440-amino-acid polypeptide reads, in one-letter code: Cell division protein FtsA (440 aa).

Belongs to the FtsA/MreB family. Self-interacts. Interacts with FtsZ.

It is found in the cell membrane. Functionally, cell division protein that is involved in the assembly of the Z ring. May serve as a membrane anchor for the Z ring. The polypeptide is Cell division protein FtsA (Enterococcus faecalis (strain ATCC 700802 / V583)).